The primary structure comprises 431 residues: MADTDDTATLRYPGGEIDLQIVHATEGADGIALGPLLAKTGHTTFDVGFANTAAAKSSITYIDGDAGILRYRGYPIDQLAEKSTFIEVCYLLIYGELPDTDQLAQFTGRIQRHTMLHEDLKRFFDGFPRNAHPMPVLSSVVNALSAYYQDALDPMDNGQVELSTIRLLAKLPTIAAYAYKKSVGQPFLYPDNSLTLVENFLRLTFGFPAEPYQADPEVVRALDMLFILHADHEQNCSTSTVRLVGSSRANLFTSISGGINALWGPLHGGANQAVLEMLEGIRDSGDDVSEFVRKVKNREAGVKLMGFGHRVYKNYDPRARIVKEQADKILAKLGGDDSLLGIAKELEEAALTDDYFIERKLYPNVDFYTGLIYRALGFPTRMFTVLFALGRLPGWIAHWREMHDEGDSKIGRPRQIYTGYTERDYVTIDAR.

Active-site residues include histidine 309 and aspartate 366.

Belongs to the citrate synthase family. Homohexamer.

The catalysed reaction is oxaloacetate + acetyl-CoA + H2O = citrate + CoA + H(+). The protein operates within carbohydrate metabolism; tricarboxylic acid cycle; isocitrate from oxaloacetate: step 1/2. This chain is Citrate synthase 1 (gltA2), found in Mycobacterium tuberculosis (strain CDC 1551 / Oshkosh).